A 334-amino-acid polypeptide reads, in one-letter code: Anthranilate phosphoribosyltransferase (334 aa).

5-phospho-alpha-D-ribose 1-diphosphate contacts are provided by residues glycine 79, 82-83, serine 87, 89-92, 107-115, and serine 119; these read GD, NIST, and KHGNRSISS. Glycine 79 contributes to the anthranilate binding site. Serine 91 contacts Mg(2+). Asparagine 110 contacts anthranilate. An anthranilate-binding site is contributed by arginine 165. 2 residues coordinate Mg(2+): aspartate 224 and glutamate 225.

Belongs to the anthranilate phosphoribosyltransferase family. Homodimer. Requires Mg(2+) as cofactor.

It catalyses the reaction N-(5-phospho-beta-D-ribosyl)anthranilate + diphosphate = 5-phospho-alpha-D-ribose 1-diphosphate + anthranilate. It participates in amino-acid biosynthesis; L-tryptophan biosynthesis; L-tryptophan from chorismate: step 2/5. Its function is as follows. Catalyzes the transfer of the phosphoribosyl group of 5-phosphorylribose-1-pyrophosphate (PRPP) to anthranilate to yield N-(5'-phosphoribosyl)-anthranilate (PRA). This is Anthranilate phosphoribosyltransferase from Streptococcus pneumoniae (strain 70585).